The following is a 239-amino-acid chain: Transmembrane ascorbate ferrireductase 1 (239 aa).

The Cytoplasmic portion of the chain corresponds to 1 to 7 (MAVRINA). Residues 8–28 (MAVTFVAHALAVIAAIMVLVW) traverse the membrane as a helical segment. In terms of domain architecture, Cytochrome b561 spans 13-216 (VAHALAVIAA…FGAFVVLTAS (204 aa)). The Lumenal portion of the chain corresponds to 29–45 (SISYRGGLAWEATNKNL). A helical membrane pass occupies residues 46–66 (IFNLHPVLMLIGFIILGGEAI). His50 lines the heme b pocket. Over 67–81 (ISYKSLPLEKPVKKL) the chain is Cytoplasmic. Residues 82 to 102 (IHLILHAIALALGIFGICAAF) traverse the membrane as a helical segment. Heme b-binding residues include His83 and His117. Topologically, residues 103–119 (KNHNESHIPNLYSLHSW) are lumenal. The chain crosses the membrane as a helical span at residues 120–140 (IGIGVISLYGFQWVYSFIVFF). Residues 141-155 (FPGGSTNLKSGLLPW) lie on the Cytoplasmic side of the membrane. His156 contacts heme b. A helical membrane pass occupies residues 156–176 (HAMLGLFVYILAVGNAALGFL). Topologically, residues 177 to 193 (EKLTFLENGGLDKYGSE) are lumenal. Residues 194 to 214 (AFLINFTAIITILFGAFVVLT) traverse the membrane as a helical segment. The Cytoplasmic portion of the chain corresponds to 215–239 (ASAESPSPSPSVSNDDSVDFSYSAI). Residues 217–239 (AESPSPSPSVSNDDSVDFSYSAI) form a disordered region. Positions 224-239 (PSVSNDDSVDFSYSAI) are enriched in low complexity.

In terms of assembly, homodimer. Requires heme b as cofactor. Expressed in roots, seedlings and leaves. Lower expression in flowers. Expressed in the L1 layer of the shoot apex, in the epidermis of leaf primordia and young leaves and in vascular bundles. In the differentiation zone of the root, detected in the pericycle and in the epidermis, but not in the cortex. Strongly expressed in the lateral part of the root cap and in the epidermis of the root tip, but not in the meristematic tissue. Not expressed in lateral roots. In mature embryos, expressed in the epidermis, cotyledon tips and root tips.

It localises to the vacuole membrane. The enzyme catalyses Fe(3+)(out) + L-ascorbate(in) = monodehydro-L-ascorbate radical(in) + Fe(2+)(out) + H(+). Two-heme-containing cytochrome. Catalyzes ascorbate-dependent trans-membrane ferric-chelate reduction. Able to use dihydrolipoic acid (DHLA) as an alternative substrate to ascorbate. This is Transmembrane ascorbate ferrireductase 1 (CYB561A) from Arabidopsis thaliana (Mouse-ear cress).